Here is a 330-residue protein sequence, read N- to C-terminus: D-lactate dehydrogenase (330 aa).

Residues 156–157, D176, 206–207, 233–235, and D259 contribute to the NAD(+) site; these read RI, VP, and AAR. Residue R235 is part of the active site. Residue E264 is part of the active site. The active-site Proton donor is H296.

The protein belongs to the D-isomer specific 2-hydroxyacid dehydrogenase family.

It carries out the reaction (R)-lactate + NAD(+) = pyruvate + NADH + H(+). In Staphylococcus epidermidis (strain ATCC 35984 / DSM 28319 / BCRC 17069 / CCUG 31568 / BM 3577 / RP62A), this protein is D-lactate dehydrogenase (ldhD).